A 231-amino-acid chain; its full sequence is U1 small nuclear ribonucleoprotein C (231 aa).

A Matrin-type zinc finger spans residues 4–36 (YYCEYCHSYLTHDTLSVRKSHLVGKNHLRITAD). Basic residues predominate over residues 49 to 61 (HNHKRRHIGKRGR). Disordered regions lie at residues 49–71 (HNHKRRHIGKRGRKERENSSQNE), 137–177 (PQRA…LEPP), and 205–231 (ESKKRMHSDGIRKPSSANGYKRRRYGN).

Belongs to the U1 small nuclear ribonucleoprotein C family. In terms of assembly, U1 snRNP is composed of the 7 core Sm proteins SMB1, SMD1, SMD2, SMD3, SME1, SMX3 and SMX2 (Sm proteins B, D1, D2, D3, E, F and G, respectively) that assemble in a heptameric protein ring on the Sm site of the small nuclear RNA to form the core snRNP, and at least 10 U1 snRNP-specific proteins SNP1/U1-70K, MUD1/U1-A, YHC1/U1-C, LUC7, NAM8, PRP39, PRP40, PRP42, SNU56 and SNU71. YHC1/U1-C interacts with U1 snRNA and the 5' splice-site region of the pre-mRNA.

The protein resides in the nucleus. In terms of biological role, component of the spliceosomal U1 snRNP, which is essential for recognition of the pre-mRNA 5' splice-site and the subsequent assembly of the spliceosome. YHC1/U1-C is directly involved in initial 5' splice-site recognition for both constitutive and regulated alternative splicing. The interaction with the 5' splice-site seems to precede base-pairing between the pre-mRNA and the U1 snRNA. Stimulates commitment or early (E) complex formation by stabilizing the base pairing of the 5' end of the U1 snRNA and the 5' splice-site region. The sequence is that of U1 small nuclear ribonucleoprotein C from Saccharomyces cerevisiae (strain ATCC 204508 / S288c) (Baker's yeast).